The sequence spans 349 residues: Selenide, water dikinase (349 aa).

The active site involves Cys-17. Residues Lys-20 and 48–50 (YFD) contribute to the ATP site. A Mg(2+)-binding site is contributed by Asp-51. Residues Asp-68, Asp-91, and 139–141 (GHS) each bind ATP. Asp-91 is a Mg(2+) binding site. Asp-229 is a Mg(2+) binding site.

This sequence belongs to the selenophosphate synthase 1 family. Class I subfamily. As to quaternary structure, homodimer. Requires Mg(2+) as cofactor.

The catalysed reaction is hydrogenselenide + ATP + H2O = selenophosphate + AMP + phosphate + 2 H(+). In terms of biological role, synthesizes selenophosphate from selenide and ATP. This Nitrosomonas eutropha (strain DSM 101675 / C91 / Nm57) protein is Selenide, water dikinase.